Reading from the N-terminus, the 299-residue chain is Ribosomal RNA small subunit methyltransferase H 1 (299 aa).

Residues 31–33, aspartate 50, phenylalanine 76, aspartate 97, and glutamine 104 contribute to the S-adenosyl-L-methionine site; that span reads GGH.

The protein belongs to the methyltransferase superfamily. RsmH family.

The protein resides in the cytoplasm. It catalyses the reaction cytidine(1402) in 16S rRNA + S-adenosyl-L-methionine = N(4)-methylcytidine(1402) in 16S rRNA + S-adenosyl-L-homocysteine + H(+). In terms of biological role, specifically methylates the N4 position of cytidine in position 1402 (C1402) of 16S rRNA. This is Ribosomal RNA small subunit methyltransferase H 1 from Acholeplasma laidlawii (strain PG-8A).